A 435-amino-acid polypeptide reads, in one-letter code: D-amino acid dehydrogenase (435 aa).

FAD is bound at residue 3 to 17 (VLILGSGVIGTTSAW).

Belongs to the DadA oxidoreductase family. FAD is required as a cofactor.

It carries out the reaction a D-alpha-amino acid + A + H2O = a 2-oxocarboxylate + AH2 + NH4(+). It participates in amino-acid degradation; D-alanine degradation; NH(3) and pyruvate from D-alanine: step 1/1. Its function is as follows. Oxidative deamination of D-amino acids. This chain is D-amino acid dehydrogenase, found in Xylella fastidiosa (strain 9a5c).